The primary structure comprises 88 residues: Apolipoprotein C-I (88 aa).

The N-terminal stretch at 1–26 (MRLLLSLPVLLVALSVVLERPAPAQA) is a signal peptide.

Belongs to the apolipoprotein C1 family.

The protein localises to the secreted. In terms of biological role, inhibitor of lipoprotein binding to the low density lipoprotein (LDL) receptor, LDL receptor-related protein, and very low density lipoprotein (VLDL) receptor. Associates with high density lipoproteins (HDL) and the triacylglycerol-rich lipoproteins in the plasma and makes up about 10% of the protein of the VLDL and 2% of that of HDL. Appears to interfere directly with fatty acid uptake and is also the major plasma inhibitor of cholesteryl ester transfer protein (CETP). Binds free fatty acids and reduces their intracellular esterification. Modulates the interaction of APOE with beta-migrating VLDL and inhibits binding of beta-VLDL to the LDL receptor-related protein. This Tupaia glis (Common tree shrew) protein is Apolipoprotein C-I (APOC1).